Reading from the N-terminus, the 338-residue chain is Heat-inducible transcription repressor HrcA (338 aa).

Belongs to the HrcA family.

Its function is as follows. Negative regulator of class I heat shock genes (grpE-dnaK-dnaJ and groELS operons). Prevents heat-shock induction of these operons. The sequence is that of Heat-inducible transcription repressor HrcA from Bacillus cereus (strain AH820).